The chain runs to 271 residues: N-acylmannosamine 1-dehydrogenase (271 aa).

20-44 (VTGAAGGIGRATVEAYLREGASVVA) serves as a coordination point for NAD(+). S153 is a substrate binding site. Residue Y166 is the Proton acceptor of the active site.

Belongs to the short-chain dehydrogenases/reductases (SDR) family.

It carries out the reaction an N-acyl-D-mannosamine + NAD(+) = an N-acyl-D-mannosaminolactone + NADH + H(+). Functionally, acts on acetyl-D-mannosamine and glycolyl-D-mannosamine. The protein is N-acylmannosamine 1-dehydrogenase of Flavobacterium sp. (strain 141-8).